Reading from the N-terminus, the 70-residue chain is uncharacterized protein (70 aa).

This is an uncharacterized protein from Swinepox virus (strain Kasza) (SWPV).